Here is a 210-residue protein sequence, read N- to C-terminus: Large ribosomal subunit protein bL25 (210 aa).

The tract at residues 190–210 (LKSEGAEGGEAEAGQAEEGEE) is disordered. Positions 196–210 (EGGEAEAGQAEEGEE) are enriched in acidic residues.

Belongs to the bacterial ribosomal protein bL25 family. CTC subfamily. In terms of assembly, part of the 50S ribosomal subunit; part of the 5S rRNA/L5/L18/L25 subcomplex. Contacts the 5S rRNA. Binds to the 5S rRNA independently of L5 and L18.

Functionally, this is one of the proteins that binds to the 5S RNA in the ribosome where it forms part of the central protuberance. In Chelativorans sp. (strain BNC1), this protein is Large ribosomal subunit protein bL25.